A 189-amino-acid chain; its full sequence is Interferon alpha-G (189 aa).

A signal peptide spans methionine 1 to glycine 23. Intrachain disulfides connect cysteine 24–cysteine 122 and cysteine 52–cysteine 162.

The protein belongs to the alpha/beta interferon family.

Its subcellular location is the secreted. In terms of biological role, produced by macrophages, IFN-alpha have antiviral activities. Interferon stimulates the production of two enzymes: a protein kinase and an oligoadenylate synthetase. The protein is Interferon alpha-G (IFNAG) of Bos taurus (Bovine).